Reading from the N-terminus, the 247-residue chain is MDRIKCTVAYDGMHFCGYQIQPQHRTVQQEIEKALQKLHKGELVRVQASGRTDSTVHAKGQVIHFDTPLSLEEWQWSNALNTMLPDDIVITQVEKKTEEFHARYGVERKEYRYRVLVSKTADVFRRNYVYQYPYPLEVNSIRKAIPYFIGTHDFTSFCSAKTDKKDKVRTIYEIELIEQDDELIFRFVGNGFLYNMVRIIVGTLLNVGQGKLDPDSIPEILAKQNRQFAGKMAPGHGLYLWQVNYNN.

The Nucleophile role is filled by Asp53. Tyr111 is a binding site for substrate.

It belongs to the tRNA pseudouridine synthase TruA family. As to quaternary structure, homodimer.

The catalysed reaction is uridine(38/39/40) in tRNA = pseudouridine(38/39/40) in tRNA. Formation of pseudouridine at positions 38, 39 and 40 in the anticodon stem and loop of transfer RNAs. The protein is tRNA pseudouridine synthase A 1 of Bacillus cereus (strain ZK / E33L).